The chain runs to 168 residues: uncharacterized protein (168 aa).

The next 2 membrane-spanning stretches (helical) occupy residues 4-24 (IIALLFFFLIAFGYSLSPEEE) and 94-114 (IMVGIFAGQIALVAAVIGFAW).

The protein to A.aeolicus aq_1446.

It localises to the cell membrane. This is an uncharacterized protein from Aquifex aeolicus (strain VF5).